A 160-amino-acid chain; its full sequence is Leptin (160 aa).

A signal peptide spans 1-17 (MDYTLALALSLLQLSMC). An intrachain disulfide couples cysteine 109 to cysteine 160.

This sequence belongs to the leptin family.

It localises to the secreted. Functionally, may function as part of a signaling pathway that acts to regulate the size of the body fat depot. This Tetraodon nigroviridis (Spotted green pufferfish) protein is Leptin (lep).